Consider the following 453-residue polypeptide: Gamma-aminobutyric acid receptor subunit alpha-6 (453 aa).

Residues M1 to A19 form the signal peptide. Over Q20 to F243 the chain is Extracellular. N31 carries N-linked (GlcNAc...) asparagine glycosylation. Position 84 (R84) interacts with 4-aminobutanoate. N128 and N141 each carry an N-linked (GlcNAc...) asparagine glycan. T147 is a 4-aminobutanoate binding site. A disulfide bond links C156 and C170. The chain crosses the membrane as a helical span at residues M244 to I264. Topologically, residues N265–P270 are cytoplasmic. A helical membrane pass occupies residues A271 to A290. The Extracellular portion of the chain corresponds to R291 to D304. The helical transmembrane segment at W305–N325 threads the bilayer. Residues Y326–R422 are Cytoplasmic-facing. Phosphoserine is present on S375. The residue at position 403 (T403) is a Phosphothreonine. Residues I423 to K443 traverse the membrane as a helical segment. Over D444–E453 the chain is Extracellular.

Belongs to the ligand-gated ion channel (TC 1.A.9) family. Gamma-aminobutyric acid receptor (TC 1.A.9.5) subfamily. GABRA6 sub-subfamily. In terms of assembly, heteropentamer, formed by a combination of alpha (GABRA1-6), beta (GABRB1-3), gamma (GABRG1-3), delta (GABRD), epsilon (GABRE), rho (GABRR1-3), pi (GABRP) and theta (GABRQ) chains, each subunit exhibiting distinct physiological and pharmacological properties. Binds UBQLN1. Expressed in brain, in cerebellar granule cells.

The protein resides in the postsynaptic cell membrane. It localises to the cell membrane. The catalysed reaction is chloride(in) = chloride(out). Functionally, alpha subunit of the heteropentameric ligand-gated chloride channel gated by gamma-aminobutyric acid (GABA), a major inhibitory neurotransmitter in the brain. GABA-gated chloride channels, also named GABA(A) receptors (GABAAR), consist of five subunits arranged around a central pore and contain GABA active binding site(s) located at the alpha and beta subunit interface(s). When activated by GABA, GABAARs selectively allow the flow of chloride anions across the cell membrane down their electrochemical gradient. Alpha-6/GABRA6 subunits are found at both synaptic and extrasynaptic sites. Chloride influx into the postsynaptic neuron following GABAAR opening decreases the neuron ability to generate a new action potential, thereby reducing nerve transmission. Extrasynaptic alpha-6-containing receptors contribute to the tonic GABAergic inhibition. Alpha-6 subunits are also present on glutamatergic synapses. The polypeptide is Gamma-aminobutyric acid receptor subunit alpha-6 (Rattus norvegicus (Rat)).